The following is a 155-amino-acid chain: Lipoprotein signal peptidase (155 aa).

A run of 4 helical transmembrane segments spans residues 7–27, 39–59, 63–83, and 96–116; these read WFWI…YITV, IIPG…FSAF, VGWL…FAYF, and GFIL…GYVV. Active-site residues include aspartate 117 and aspartate 133. Residues 126-146 traverse the membrane as a helical segment; sequence FPVFNLADVFINIGIICLLIS.

The protein belongs to the peptidase A8 family.

It is found in the cell inner membrane. The enzyme catalyses Release of signal peptides from bacterial membrane prolipoproteins. Hydrolyzes -Xaa-Yaa-Zaa-|-(S,diacylglyceryl)Cys-, in which Xaa is hydrophobic (preferably Leu), and Yaa (Ala or Ser) and Zaa (Gly or Ala) have small, neutral side chains.. Its pathway is protein modification; lipoprotein biosynthesis (signal peptide cleavage). This protein specifically catalyzes the removal of signal peptides from prolipoproteins. The protein is Lipoprotein signal peptidase of Microcystis aeruginosa (strain NIES-843 / IAM M-2473).